Reading from the N-terminus, the 169-residue chain is MHHRPERDKRVTTHVALVARAFGAKGIFIHGEDMNLLKTIEKVKANWGGKYFSIEFVKNPKKVVRDWRNSGGIVVHLTMYGIPIDNIMEKIINKNTKILVVVGSEKVEGWYYYNSDYNIAIGNQPHSEVAALAIFLDRIYKGGELNIQFSDAKLSIIPQERGKKVRKNE.

Residues L77, 103–107, and 121–128 each bind S-adenosyl-L-methionine; these read GSEKV and IGNQPHSE.

This sequence belongs to the aTrm56 family. As to quaternary structure, homodimer.

The protein localises to the cytoplasm. It carries out the reaction cytidine(56) in tRNA + S-adenosyl-L-methionine = 2'-O-methylcytidine(56) in tRNA + S-adenosyl-L-homocysteine + H(+). In terms of biological role, specifically catalyzes the AdoMet-dependent 2'-O-ribose methylation of cytidine at position 56 in tRNAs. The sequence is that of tRNA (cytidine(56)-2'-O)-methyltransferase from Sulfurisphaera tokodaii (strain DSM 16993 / JCM 10545 / NBRC 100140 / 7) (Sulfolobus tokodaii).